The chain runs to 120 residues: Aspartate 1-decarboxylase (120 aa).

Catalysis depends on Ser25, which acts as the Schiff-base intermediate with substrate; via pyruvic acid. Ser25 is subject to Pyruvic acid (Ser). Thr57 serves as a coordination point for substrate. Residue Tyr58 is the Proton donor of the active site. Position 73–75 (Gly73–Ala75) interacts with substrate.

The protein belongs to the PanD family. Heterooctamer of four alpha and four beta subunits. Requires pyruvate as cofactor. Post-translationally, is synthesized initially as an inactive proenzyme, which is activated by self-cleavage at a specific serine bond to produce a beta-subunit with a hydroxyl group at its C-terminus and an alpha-subunit with a pyruvoyl group at its N-terminus.

It is found in the cytoplasm. It carries out the reaction L-aspartate + H(+) = beta-alanine + CO2. It participates in cofactor biosynthesis; (R)-pantothenate biosynthesis; beta-alanine from L-aspartate: step 1/1. Its function is as follows. Catalyzes the pyruvoyl-dependent decarboxylation of aspartate to produce beta-alanine. The polypeptide is Aspartate 1-decarboxylase (Ralstonia nicotianae (strain ATCC BAA-1114 / GMI1000) (Ralstonia solanacearum)).